Here is a 95-residue protein sequence, read N- to C-terminus: Aspartyl/glutamyl-tRNA(Asn/Gln) amidotransferase subunit C (95 aa).

Belongs to the GatC family. Heterotrimer of A, B and C subunits.

The enzyme catalyses L-glutamyl-tRNA(Gln) + L-glutamine + ATP + H2O = L-glutaminyl-tRNA(Gln) + L-glutamate + ADP + phosphate + H(+). It carries out the reaction L-aspartyl-tRNA(Asn) + L-glutamine + ATP + H2O = L-asparaginyl-tRNA(Asn) + L-glutamate + ADP + phosphate + 2 H(+). In terms of biological role, allows the formation of correctly charged Asn-tRNA(Asn) or Gln-tRNA(Gln) through the transamidation of misacylated Asp-tRNA(Asn) or Glu-tRNA(Gln) in organisms which lack either or both of asparaginyl-tRNA or glutaminyl-tRNA synthetases. The reaction takes place in the presence of glutamine and ATP through an activated phospho-Asp-tRNA(Asn) or phospho-Glu-tRNA(Gln). The protein is Aspartyl/glutamyl-tRNA(Asn/Gln) amidotransferase subunit C of Azoarcus sp. (strain BH72).